A 177-amino-acid polypeptide reads, in one-letter code: Thymidine kinase (177 aa).

Glycine 11–serine 18 provides a ligand contact to ATP. Glutamate 83 functions as the Proton acceptor in the catalytic mechanism. Phenylalanine 113 is a binding site for substrate. Residues cysteine 138 and cysteine 141 each coordinate Zn(2+). Isoleucine 157–glycine 161 contributes to the substrate binding site. Cysteine 170 and cysteine 173 together coordinate Zn(2+).

The protein belongs to the thymidine kinase family. In terms of assembly, homotetramer. Two molecules of substrate bind to each enzyme tetramer.

It carries out the reaction thymidine + ATP = dTMP + ADP + H(+). Phosphorylates thymidine and thymidine analogs, such as azidothymidine (AZT). Part of the salvage pathway for pyrimidine deoxyribonucleotide synthesis. The sequence is that of Thymidine kinase (OPG101) from Cynomys gunnisoni (Gunnison's prairie dog).